The chain runs to 771 residues: Protein translocase subunit SecA 2 (771 aa).

Residues Q91, G109–T113, and D496 contribute to the ATP site.

The protein belongs to the SecA family. In terms of assembly, monomer and homodimer. Part of the essential Sec protein translocation apparatus which comprises SecA, SecYEG and auxiliary proteins SecDF. Other proteins may also be involved.

It is found in the cell membrane. Its subcellular location is the cytoplasm. The enzyme catalyses ATP + H2O + cellular proteinSide 1 = ADP + phosphate + cellular proteinSide 2.. Functionally, part of the Sec protein translocase complex. Interacts with the SecYEG preprotein conducting channel. Has a central role in coupling the hydrolysis of ATP to the transfer of proteins into and across the cell membrane, serving as an ATP-driven molecular motor driving the stepwise translocation of polypeptide chains across the membrane. This chain is Protein translocase subunit SecA 2, found in Corynebacterium jeikeium (strain K411).